The primary structure comprises 608 residues: 1-deoxy-D-xylulose-5-phosphate synthase (608 aa).

Residues His66 and 107-109 each bind thiamine diphosphate; that span reads GHA. Mg(2+) is bound at residue Asp138. Residues 139-140, Asn167, Phe277, and Glu350 contribute to the thiamine diphosphate site; that span reads GA. Asn167 is a Mg(2+) binding site.

It belongs to the transketolase family. DXPS subfamily. Homodimer. The cofactor is Mg(2+). Requires thiamine diphosphate as cofactor.

It carries out the reaction D-glyceraldehyde 3-phosphate + pyruvate + H(+) = 1-deoxy-D-xylulose 5-phosphate + CO2. It participates in metabolic intermediate biosynthesis; 1-deoxy-D-xylulose 5-phosphate biosynthesis; 1-deoxy-D-xylulose 5-phosphate from D-glyceraldehyde 3-phosphate and pyruvate: step 1/1. Functionally, catalyzes the acyloin condensation reaction between C atoms 2 and 3 of pyruvate and glyceraldehyde 3-phosphate to yield 1-deoxy-D-xylulose-5-phosphate (DXP). This Thermotoga petrophila (strain ATCC BAA-488 / DSM 13995 / JCM 10881 / RKU-1) protein is 1-deoxy-D-xylulose-5-phosphate synthase.